The sequence spans 548 residues: Probable malate:quinone oxidoreductase (548 aa).

The disordered stretch occupies residues Asp-521–Leu-548. Over residues Val-539–Leu-548 the composition is skewed to basic and acidic residues.

It belongs to the MQO family. FAD is required as a cofactor.

It catalyses the reaction (S)-malate + a quinone = a quinol + oxaloacetate. It participates in carbohydrate metabolism; tricarboxylic acid cycle; oxaloacetate from (S)-malate (quinone route): step 1/1. This is Probable malate:quinone oxidoreductase from Escherichia coli (strain ATCC 8739 / DSM 1576 / NBRC 3972 / NCIMB 8545 / WDCM 00012 / Crooks).